The chain runs to 383 residues: NifS-like protein (383 aa).

Residues 58 to 59 (SE) and 184 to 186 (SIN) contribute to the pyridoxal 5'-phosphate site.

It belongs to the class-V pyridoxal-phosphate-dependent aminotransferase family. NifS/IscS subfamily. Pyridoxal 5'-phosphate is required as a cofactor.

Its subcellular location is the virion. This chain is NifS-like protein, found in African swine fever virus (strain Badajoz 1971 Vero-adapted) (Ba71V).